A 92-amino-acid chain; its full sequence is Large ribosomal subunit protein bL27 (92 aa).

The segment at 1-22 is disordered; it reads MAHTKAGGSTRNGRDSRGQRLG.

It belongs to the bacterial ribosomal protein bL27 family.

This chain is Large ribosomal subunit protein bL27, found in Mycoplasmopsis agalactiae (strain NCTC 10123 / CIP 59.7 / PG2) (Mycoplasma agalactiae).